Consider the following 132-residue polypeptide: Histone H2A.1 (132 aa).

At Ser-2 the chain carries N-acetylserine. N6-acetyllysine occurs at positions 5 and 8. N6-succinyllysine is present on residues Lys-14 and Lys-22. An N5-methylglutamine modification is found at Gln-106. The residue at position 120 (Lys-120) is an N6-malonyllysine; alternate. Residue Lys-127 forms a Glycyl lysine isopeptide (Lys-Gly) (interchain with G-Cter in SUMO) linkage. The residue at position 129 (Ser-129) is a Phosphoserine. The [ST]-Q motif signature appears at 129 to 130 (SQ).

This sequence belongs to the histone H2A family. In terms of assembly, the nucleosome is a histone octamer containing two molecules each of H2A, H2B, H3 and H4 assembled in one H3-H4 heterotetramer and two H2A-H2B heterodimers. The octamer wraps approximately 147 bp of DNA. Phosphorylated to form H2AS128ph (gamma-H2A) in response to DNA double-strand breaks (DSBs) generated by exogenous genotoxic agents and by stalled replication forks. Phosphorylation is dependent on the DNA damage checkpoint kinases MEC1/ATR and TEL1/ATM, spreads on either side of a detected DSB site and may mark the surrounding chromatin for recruitment of proteins required for DNA damage signaling and repair. Gamma-H2A interacts with ARP4, a shared component of the NuA4 histone acetyltransferase complex and the INO80 and SWR1 chromatin remodeling complexes, and serves to recruit first NuA4, mediating histone H4 acetylation, and subsequently the INO80/SWR1 complexes, facilitating DNA resection, to DSB sites. Gamma-H2A is required for sequestering cohesin around the break site, which is important for efficient post-replicative double-strand break repair by homologous recombination, holding the damaged chromatid close to its undamaged sister template. Gamma-H2A is removed from the DNA prior to the strand invasion-primer extension step of the repair process and subsequently dephosphorylated by PPH3, a component of the histone H2A phosphatase complex (HTP-C). Dephosphorylation is necessary for efficient recovery from the DNA damage checkpoint. Post-translationally, N-acetylated by NAT4. In terms of processing, acetylated by ESA1, a component of the NuA4 histone acetyltransferase (HAT) complex, to form H2AK4ac and H2AK7ac. Glutamine methylation at Gln-106 (H2AQ105me) by NOP1 is specifically dedicated to polymerase I. It is present at 35S ribosomal DNA locus and impairs binding of the FACT complex. Post-translationally, sumoylated to from H2AK126su. May lead to transcriptional repression.

Its subcellular location is the nucleus. The protein localises to the chromosome. In terms of biological role, core component of nucleosome which plays a central role in DNA double strand break (DSB) repair. Nucleosomes wrap and compact DNA into chromatin, limiting DNA accessibility to the cellular machineries which require DNA as a template. Histones thereby play a central role in transcription regulation, DNA repair, DNA replication and chromosomal stability. DNA accessibility is regulated via a complex set of post-translational modifications of histones, also called histone code, and nucleosome remodeling. The polypeptide is Histone H2A.1 (HTA1) (Saccharomyces cerevisiae (strain ATCC 204508 / S288c) (Baker's yeast)).